The primary structure comprises 613 residues: Cleavage and polyadenylation specificity factor subunit 3-II (613 aa).

The short motif at 67 to 72 (HFHMDH) is the HXHXDH motif element.

Belongs to the metallo-beta-lactamase superfamily. RNA-metabolizing metallo-beta-lactamase-like family. INTS11 subfamily. In terms of assembly, component of the CPSF complex, at least composed of CPSF160, CPSF100, CPSF73-I, CPSF73-II, CPSF30, FY and FIPS5. Interacts with CPSF30, CPSF100, CPSF160 and FY. In terms of tissue distribution, highly expressed in senescence leaves, petals, stamens, pollen and late stages of siliques with seeds. Also detected in roots, stems, leaves and seedlings.

It localises to the nucleus. Its function is as follows. Component of the cleavage and polyadenylation specificity factor (CPSF) complex that play a key role in pre-mRNA 3'-end formation, recognizing the AAUAAA signal sequence and interacting with poly(A) polymerase and other factors to bring about cleavage and poly(A) addition. May function as mRNA 3'-end-processing endonuclease and also be involved in the histone 3'-end pre-mRNA processing. This is Cleavage and polyadenylation specificity factor subunit 3-II (CPSF73-II) from Arabidopsis thaliana (Mouse-ear cress).